The primary structure comprises 562 residues: MDYKQLVAAALAPALPDLTQEAILDKIEQPKTSKQGDLAFPTFTLAKTLHKAPQMIASDIVEKVDSSDFEKVVAMGPYVNFFFKKDAFAADILNQVLSNGGHFGDAKLGEAGQVPIDMSSPNIAKPISMGHLRSTVIGNSLANILSKLDYQPVKINHLGDWGTQFGKLITAYKMWGSEAEVKADPINNLLKYYVRFHKEDVDHPEMDDEAREWFKKLENGDEEATHLWSWFRSESLKAFKKIYQRLDIDFDSFKGEAFYNDKMQEVVDILEDKHLLQESQGAEVVDLSKYDLNPALIKKSDGATLYITRDLAAAIYRKRTYDFVQSLYVVGNEQTNHFKQLKAVLTEMGFDWADQIHHIPFGLITSGGKKLSTRSGRVILLDKVLDDAVALAHEQIEAKNPDLPNKDEVADAVGIGAVVFHDLKNERMNSFDFNLEEVVRFEGETGPYVQYAHARAESILRKAGSPEIAATEQTLSDPAAWDTLKLLSEFPATVVRASTEYEPSVIAKYAIHLAKAYNKYYANTKILVEDDELNARLALVKSVSIVLKEALRLLGVKAPDEM.

The short motif at 121–131 is the 'HIGH' region element; sequence PNIAKPISMGH.

It belongs to the class-I aminoacyl-tRNA synthetase family. As to quaternary structure, monomer.

The protein localises to the cytoplasm. The enzyme catalyses tRNA(Arg) + L-arginine + ATP = L-arginyl-tRNA(Arg) + AMP + diphosphate. The sequence is that of Arginine--tRNA ligase from Lactiplantibacillus plantarum (strain ATCC BAA-793 / NCIMB 8826 / WCFS1) (Lactobacillus plantarum).